The sequence spans 219 residues: Small ribosomal subunit protein uS3c (219 aa).

The region spanning 43–118 is the KH type-2 domain; that stretch reads IKNYVQKNMK…KLNIAITRIA (76 aa).

The protein belongs to the universal ribosomal protein uS3 family. In terms of assembly, part of the 30S ribosomal subunit.

Its subcellular location is the plastid. The protein resides in the chloroplast. The sequence is that of Small ribosomal subunit protein uS3c (rps3) from Panax ginseng (Korean ginseng).